Reading from the N-terminus, the 521-residue chain is uncharacterized protein (521 aa).

10 consecutive transmembrane segments (helical) span residues 103–123, 136–156, 177–197, 200–220, 259–279, 299–319, 327–346, 358–378, 411–431, and 450–470; these read NLMLQVLAPCFVLLWCAVPMP, FWFFLIFYYGIYNAVGLLWIT, YILFWMFSLLVGSLVVYFTAW, ITFTWITLMFISMIIPIGISF, AYAHYSWFIVVLLVTLLVYIV, IMYVYSWTGTVSLCNLVSSWI, YALVTVFKLYFELTLQVYVR, FVLVQIASSLTMMSVIPLITM, CVASNVSMLSFLGWSLILHFG, and FKLTFYASTAVWISEMVASYL.

The protein resides in the membrane. This is an uncharacterized protein from Schizosaccharomyces pombe (strain 972 / ATCC 24843) (Fission yeast).